Reading from the N-terminus, the 635-residue chain is DNA-directed RNA polymerase subunit gamma (635 aa).

The Zn(2+) site is built by Cys74, Cys76, Cys89, and Cys92. Residues Asp471, Asp473, and Asp475 each contribute to the Mg(2+) site.

The protein belongs to the RNA polymerase beta' chain family. RpoC1 subfamily. In cyanobacteria the RNAP catalytic core is composed of 2 alpha, 1 beta, 1 beta', 1 gamma and 1 omega subunit. When a sigma factor is associated with the core the holoenzyme is formed, which can initiate transcription. Mg(2+) is required as a cofactor. The cofactor is Zn(2+).

It carries out the reaction RNA(n) + a ribonucleoside 5'-triphosphate = RNA(n+1) + diphosphate. Its function is as follows. DNA-dependent RNA polymerase catalyzes the transcription of DNA into RNA using the four ribonucleoside triphosphates as substrates. This chain is DNA-directed RNA polymerase subunit gamma, found in Prochlorococcus marinus (strain NATL1A).